The chain runs to 478 residues: MVWIQRRRLLASCLCITATVFLLVTLQVVVELGKFERKKFKNSDLRAGHAKMEEEPVHLYPLPGKEALILKRKNQLETDSYPIMLWWSPLTGETGRLGQCGADECFFTINRTYLHHPMTKAFLFYGTDFNIDSLPLPRKAHHDWALFHEESPKNNYKLFHKPVITLFNYTATFSRHSHLPLTTQYLEGVEVLKSLRYLVPLRSKNNLRRRLAPLVYIQSDCDPPSDRDSYVRELMTYIEVDSYGECLRNKDLPQQLKNPASMDADGFYRIIAQYKFILAFENAVCDDYITEKFWRPLKLGVVPVYYGSPSIADWLPSNRSAILVSEFAHPRELANYIRQLDHDDRMYEAYIEWKLKGEVSNQRLLTALRERKWGVQDVHQDNYIDAFECMVCTKVWDNIRLQEKGLPPKRWKADVSHLSCPEPAVFAFSPLAPRWSSLREMWIPSFEQSKKEAQALRWLVDRNKNFSAQEFWALVFKD.

Residues M1–R8 lie on the Cytoplasmic side of the membrane. The helical; Signal-anchor for type II membrane protein transmembrane segment at L9–E31 threads the bilayer. The Lumenal portion of the chain corresponds to L32–D478. 2 N-linked (GlcNAc...) asparagine glycosylation sites follow: N110 and N168. Cysteines 389 and 392 form a disulfide.

The protein belongs to the glycosyltransferase 10 family.

The protein localises to the endoplasmic reticulum membrane. It carries out the reaction L-threonyl-[protein] + GDP-beta-L-fucose = 3-O-(alpha-L-fucosyl)-L-threonyl-[protein] + GDP + H(+). The enzyme catalyses L-seryl-[protein] + GDP-beta-L-fucose = 3-O-(alpha-L-fucosyl)-L-seryl-[protein] + GDP + H(+). The protein operates within protein modification; protein glycosylation. Its function is as follows. Protein O-fucosyltransferase that specifically catalyzes O-fucosylation of serine or threonine residues in EMI domains of target proteins, such as MMRN1, MMRN2 and EMID1. Attaches fucose through an O-glycosidic linkage. O-fucosylation of EMI domain-containing proteins may be required for facilitating protein folding and secretion. May also show alpha-(1,3)-fucosyltransferase activity toward the innermost N-acetyl glucosamine (GlcNAc) residue in biantennary N-glycan acceptors. However, this was tested with a library of synthetic substrates and this activity is unsure in vivo. May be involved in biosynthesis of Lewis X-carrying biantennary N-glycans that regulate neuron stem cell self-renewal during brain development. In Canis lupus familiaris (Dog), this protein is GDP-fucose protein O-fucosyltransferase 3 (FUT10).